The primary structure comprises 216 residues: Acyl-homoserine-lactone synthase (216 aa).

Belongs to the autoinducer synthase family.

The enzyme catalyses a fatty acyl-[ACP] + S-adenosyl-L-methionine = an N-acyl-L-homoserine lactone + S-methyl-5'-thioadenosine + holo-[ACP] + H(+). In terms of biological role, required for the synthesis of OHHL (N-(3-oxohexanoyl)-L-homoserine lactone), an autoinducer molecule which binds to CarR and thus acts in the control of the biosynthesis of carbapenem antibiotics. The protein is Acyl-homoserine-lactone synthase (carI) of Pectobacterium carotovorum subsp. carotovorum (Erwinia carotovora subsp. carotovora).